A 160-amino-acid chain; its full sequence is SsrA-binding protein (160 aa).

Belongs to the SmpB family.

Its subcellular location is the cytoplasm. Required for rescue of stalled ribosomes mediated by trans-translation. Binds to transfer-messenger RNA (tmRNA), required for stable association of tmRNA with ribosomes. tmRNA and SmpB together mimic tRNA shape, replacing the anticodon stem-loop with SmpB. tmRNA is encoded by the ssrA gene; the 2 termini fold to resemble tRNA(Ala) and it encodes a 'tag peptide', a short internal open reading frame. During trans-translation Ala-aminoacylated tmRNA acts like a tRNA, entering the A-site of stalled ribosomes, displacing the stalled mRNA. The ribosome then switches to translate the ORF on the tmRNA; the nascent peptide is terminated with the 'tag peptide' encoded by the tmRNA and targeted for degradation. The ribosome is freed to recommence translation, which seems to be the essential function of trans-translation. This chain is SsrA-binding protein, found in Marinobacter nauticus (strain ATCC 700491 / DSM 11845 / VT8) (Marinobacter aquaeolei).